A 287-amino-acid chain; its full sequence is Large ribosomal subunit protein uL2 (287 aa).

A disordered region spans residues 221–287 (RGSVMNPCDH…SKRSRGGRDS (67 aa)). The segment covering 271–287 (LRKRRKTSKRSRGGRDS) has biased composition (basic residues).

Belongs to the universal ribosomal protein uL2 family. Part of the 50S ribosomal subunit. Forms a bridge to the 30S subunit in the 70S ribosome.

Functionally, one of the primary rRNA binding proteins. Required for association of the 30S and 50S subunits to form the 70S ribosome, for tRNA binding and peptide bond formation. It has been suggested to have peptidyltransferase activity; this is somewhat controversial. Makes several contacts with the 16S rRNA in the 70S ribosome. The protein is Large ribosomal subunit protein uL2 of Synechococcus sp. (strain CC9605).